The following is a 405-amino-acid chain: SPbeta prophage-derived uncharacterized protein YonJ (405 aa).

A coiled-coil region spans residues aspartate 72–glutamate 101.

The polypeptide is SPbeta prophage-derived uncharacterized protein YonJ (yonJ) (Bacillus subtilis (strain 168)).